We begin with the raw amino-acid sequence, 230 residues long: Cytidylate kinase (230 aa).

12-20 (GPSGTGKST) lines the ATP pocket.

Belongs to the cytidylate kinase family. Type 1 subfamily.

It localises to the cytoplasm. It carries out the reaction CMP + ATP = CDP + ADP. The catalysed reaction is dCMP + ATP = dCDP + ADP. This is Cytidylate kinase from Corynebacterium glutamicum (strain ATCC 13032 / DSM 20300 / JCM 1318 / BCRC 11384 / CCUG 27702 / LMG 3730 / NBRC 12168 / NCIMB 10025 / NRRL B-2784 / 534).